The following is a 197-amino-acid chain: Holliday junction branch migration complex subunit RuvA (197 aa).

Residues 1–63 (MYAYLKGIIT…EDAHLLYGFR (63 aa)) form a domain I region. The tract at residues 64-142 (SEDEKKLFLS…VAGDGLPAKV (79 aa)) is domain II. The tract at residues 143–147 (AVQAS) is flexible linker. A domain III region spans residues 148-197 (AENQELEEAMEAMLALGYKATELKKIKKFFEGTTDTAENYIKSALKMLVK).

The protein belongs to the RuvA family. In terms of assembly, homotetramer. Forms an RuvA(8)-RuvB(12)-Holliday junction (HJ) complex. HJ DNA is sandwiched between 2 RuvA tetramers; dsDNA enters through RuvA and exits via RuvB. An RuvB hexamer assembles on each DNA strand where it exits the tetramer. Each RuvB hexamer is contacted by two RuvA subunits (via domain III) on 2 adjacent RuvB subunits; this complex drives branch migration. In the full resolvosome a probable DNA-RuvA(4)-RuvB(12)-RuvC(2) complex forms which resolves the HJ.

It is found in the cytoplasm. Its function is as follows. The RuvA-RuvB-RuvC complex processes Holliday junction (HJ) DNA during genetic recombination and DNA repair, while the RuvA-RuvB complex plays an important role in the rescue of blocked DNA replication forks via replication fork reversal (RFR). RuvA specifically binds to HJ cruciform DNA, conferring on it an open structure. The RuvB hexamer acts as an ATP-dependent pump, pulling dsDNA into and through the RuvAB complex. HJ branch migration allows RuvC to scan DNA until it finds its consensus sequence, where it cleaves and resolves the cruciform DNA. The sequence is that of Holliday junction branch migration complex subunit RuvA from Streptococcus pneumoniae serotype 2 (strain D39 / NCTC 7466).